The primary structure comprises 346 residues: Melatonin receptor type 1C (346 aa).

Topologically, residues 1 to 26 are extracellular; it reads MERPGSNGSCSGCRLEGGPAARAASG. N-linked (GlcNAc...) asparagine glycosylation occurs at Asn7. Residues 27–47 form a helical membrane-spanning segment; it reads LAAVLIVTIVVDVLGNALVIL. The Cytoplasmic segment spans residues 48 to 60; the sequence is SVLRNKKLRNAGN. Residues 61–81 form a helical membrane-spanning segment; sequence IFVVSLSVADLVVAVYPYPLI. At 82 to 99 the chain is on the extracellular side; sequence LSAIFHNGWTMGNIHCQI. Cys97 and Cys174 are oxidised to a cystine. The helical transmembrane segment at 100 to 120 threads the bilayer; it reads SGFLMGLSVIGSIFNITAIAI. Over 121 to 139 the chain is Cytoplasmic; sequence NRYCYICHSLRYDKLFNLK. The chain crosses the membrane as a helical span at residues 140-160; the sequence is NTCCYICLTWTLTVVAIVPNF. Residues 161-184 lie on the Extracellular side of the membrane; the sequence is FVGSLQYDPRIYSCTFAQTVSTSY. The chain crosses the membrane as a helical span at residues 185-205; the sequence is TITVVVVHFIVPLSIVTFCYL. The Cytoplasmic portion of the chain corresponds to 206 to 237; sequence RIWILVIQVKHRVRQDCKQKIRAADIRNFLTM. A helical membrane pass occupies residues 238 to 258; it reads FVVFVLFAVCWGPLNFIGLAV. Residues 259–271 are Extracellular-facing; that stretch reads SINPSKVQPHIPE. A helical transmembrane segment spans residues 272 to 292; the sequence is WLFVLSYFMAYFNSCLNAVIY. Topologically, residues 293-346 are cytoplasmic; it reads GLLNQNFRKEYKRILLMLRTPRLLFIDVSKGGTEGLKSKPSPAVTNNNQAEIHL. The interval 326–346 is disordered; it reads EGLKSKPSPAVTNNNQAEIHL. A compositionally biased stretch (polar residues) spans 335-346; that stretch reads AVTNNNQAEIHL.

This sequence belongs to the G-protein coupled receptor 1 family. As to expression, expressed in optic tectum, neostriatum, hypothalamus, thalamus and pineal gland, less in cerebellum and retina.

It localises to the cell membrane. In terms of biological role, high affinity receptor for melatonin. The activity of this receptor is mediated by pertussis toxin sensitive G proteins that inhibits adenylate cyclase activity. This Gallus gallus (Chicken) protein is Melatonin receptor type 1C.